A 257-amino-acid chain; its full sequence is Adenylate kinase (257 aa).

Residue 52–57 participates in ATP binding; that stretch reads GAGKGT. Positions 72-101 are NMP; the sequence is ATGDMLRSQVAKKTELGKEAKKIMDQGGLV. AMP contacts are provided by residues Thr-73, Arg-78, 99–101, 128–131, and Gln-135; these read GLV and GFPR. Residues 169-206 are LID; that stretch reads GRLVHPASGRSYHKIFNPPKNEMLDDITGEPLIQRSDD. ATP contacts are provided by residues Arg-170 and 179–180; that span reads SY. 2 residues coordinate AMP: Arg-203 and Arg-214. Gln-242 lines the ATP pocket.

This sequence belongs to the adenylate kinase family. AK2 subfamily. Monomer.

The protein localises to the cytoplasm. Its subcellular location is the cytosol. The protein resides in the mitochondrion intermembrane space. It catalyses the reaction AMP + ATP = 2 ADP. Its function is as follows. Catalyzes the reversible transfer of the terminal phosphate group between ATP and AMP. Plays an important role in cellular energy homeostasis and in adenine nucleotide metabolism. Adenylate kinase activity is critical for regulation of the phosphate utilization and the AMP de novo biosynthesis pathways. The sequence is that of Adenylate kinase (adk1) from Aspergillus clavatus (strain ATCC 1007 / CBS 513.65 / DSM 816 / NCTC 3887 / NRRL 1 / QM 1276 / 107).